A 108-amino-acid polypeptide reads, in one-letter code: MAQEILITTTENIPGKKYEVIGEVFGLTTQSKNVISNIGAGLKNIVGGEIKAYSDMLHESREKAIERLRDEAQKAGGDAVVMMRFDSGSIGGDMQSVVAYGTAVKFLN.

It belongs to the UPF0145 family.

This Lacticaseibacillus casei (strain BL23) (Lactobacillus casei) protein is UPF0145 protein LCABL_07110.